The primary structure comprises 219 residues: Large ribosomal subunit protein bL25 (219 aa).

Residues 194–219 (SSTELEETPEVPASAVPTTDQGESAE) are disordered. The segment covering 209-219 (VPTTDQGESAE) has biased composition (polar residues).

It belongs to the bacterial ribosomal protein bL25 family. CTC subfamily. As to quaternary structure, part of the 50S ribosomal subunit; part of the 5S rRNA/L5/L18/L25 subcomplex. Contacts the 5S rRNA. Binds to the 5S rRNA independently of L5 and L18.

Functionally, this is one of the proteins that binds to the 5S RNA in the ribosome where it forms part of the central protuberance. The polypeptide is Large ribosomal subunit protein bL25 (Legionella pneumophila (strain Paris)).